Consider the following 266-residue polypeptide: MTAQMFTIALLLSLSAIAAAGTIKTAPARTPSTQDDASFPPDGAPVKRFDAFTTGFGHSKRNFDEIDRSGFGFAKKNFDEIDRSGFGFNKRNFDEIDRSGFGFNKRNFDEIDRSGFGFNKRNFDEIDRSGFGFNKRNFDEIDRSGFGFNKRNFDEIDRSGFGFNKRNFDEIDRSGFGFNKRNFDEIDRSGFGFVKRVYVPRYIANLYKRNFDEIDRSGFGFNKRNFDEIDRTGFGFHKRDYDVFPDKRNFDEIDRSGFGFVRRNVE.

The N-terminal stretch at 1–20 (MTAQMFTIALLLSLSAIAAA) is a signal peptide. Propeptides lie at residues 21 to 46 (GTIKTAPARTPSTQDDASFPPDGAPV), 240 to 246 (DYDVFPD), and 264 to 266 (NVE).

This sequence belongs to the orcokinin family.

The protein resides in the secreted. Its function is as follows. Myotropic peptides that enhance both the frequency and amplitude of spontaneous hindgut contractions. This Procambarus clarkii (Red swamp crayfish) protein is Orcokinin peptides type B.